We begin with the raw amino-acid sequence, 503 residues long: Aromatase (503 aa).

Residues 21–41 (VTVSAMPLLLIMGLLLLIWNC) form a helical membrane-spanning segment. Substrate-binding residues include D309 and M374. C437 is a heme binding site.

Belongs to the cytochrome P450 family. Requires heme as cofactor.

The protein localises to the endoplasmic reticulum membrane. It localises to the microsome membrane. The catalysed reaction is testosterone + 3 reduced [NADPH--hemoprotein reductase] + 3 O2 = 17beta-estradiol + formate + 3 oxidized [NADPH--hemoprotein reductase] + 4 H2O + 4 H(+). The enzyme catalyses androst-4-ene-3,17-dione + 3 reduced [NADPH--hemoprotein reductase] + 3 O2 = estrone + formate + 3 oxidized [NADPH--hemoprotein reductase] + 4 H2O + 4 H(+). It carries out the reaction androst-4-ene-3,17-dione + reduced [NADPH--hemoprotein reductase] + O2 = 19-hydroxyandrost-4-ene-3,17-dione + oxidized [NADPH--hemoprotein reductase] + H2O + H(+). It catalyses the reaction 19-hydroxyandrost-4-ene-3,17-dione + reduced [NADPH--hemoprotein reductase] + O2 = 19-oxo-androst-4-ene-3,17-dione + oxidized [NADPH--hemoprotein reductase] + 2 H2O + H(+). The catalysed reaction is 19-oxo-androst-4-ene-3,17-dione + reduced [NADPH--hemoprotein reductase] + O2 = estrone + formate + oxidized [NADPH--hemoprotein reductase] + H2O + 2 H(+). The enzyme catalyses estrone + reduced [NADPH--hemoprotein reductase] + O2 = 2-hydroxyestrone + oxidized [NADPH--hemoprotein reductase] + H2O + H(+). It carries out the reaction 17beta-hydroxy-5alpha-androstan-3-one + reduced [NADPH--hemoprotein reductase] + O2 = 17beta,19-dihydroxy-3-oxo-5alpha-androstanone + oxidized [NADPH--hemoprotein reductase] + H2O + H(+). It catalyses the reaction 17beta,19-dihydroxy-3-oxo-5alpha-androstanone + reduced [NADPH--hemoprotein reductase] + O2 = 17beta-hydroxy-3,19-dioxo-5alpha-androstanone + oxidized [NADPH--hemoprotein reductase] + 2 H2O + H(+). The catalysed reaction is 17beta-hydroxy-3,19-dioxo-5alpha-androstanone + reduced [NADPH--hemoprotein reductase] + O2 = 17beta-hydroxy-3-oxo-19-nor-5alpha-androst-1-ene + formate + oxidized [NADPH--hemoprotein reductase] + H2O + 2 H(+). It participates in steroid hormone biosynthesis. Functionally, a cytochrome P450 monooxygenase that catalyzes the conversion of C19 androgens, androst-4-ene-3,17-dione (androstenedione) and testosterone to the C18 estrogens, estrone and estradiol, respectively. Catalyzes three successive oxidations of C19 androgens: two conventional oxidations at C19 yielding 19-hydroxy and 19-oxo/19-aldehyde derivatives, followed by a third oxidative aromatization step that involves C1-beta hydrogen abstraction combined with cleavage of the C10-C19 bond to yield a phenolic A ring and formic acid. Alternatively, the third oxidative reaction yields a 19-norsteroid and formic acid. Converts dihydrotestosterone to delta1,10-dehydro 19-nordihydrotestosterone and may play a role in homeostasis of this potent androgen. Also displays 2-hydroxylase activity toward estrone. Mechanistically, uses molecular oxygen inserting one oxygen atom into a substrate, and reducing the second into a water molecule, with two electrons provided by NADPH via cytochrome P450 reductase (CPR; NADPH-ferrihemoprotein reductase). In Mus musculus (Mouse), this protein is Aromatase (Cyp19a1).